A 293-amino-acid chain; its full sequence is Acetylglutamate kinase (293 aa).

Residues 68 to 69 (GG), Arg-90, and Asn-189 contribute to the substrate site.

The protein belongs to the acetylglutamate kinase family. ArgB subfamily.

The protein resides in the cytoplasm. The enzyme catalyses N-acetyl-L-glutamate + ATP = N-acetyl-L-glutamyl 5-phosphate + ADP. It functions in the pathway amino-acid biosynthesis; L-arginine biosynthesis; N(2)-acetyl-L-ornithine from L-glutamate: step 2/4. Its function is as follows. Catalyzes the ATP-dependent phosphorylation of N-acetyl-L-glutamate. This Caldicellulosiruptor saccharolyticus (strain ATCC 43494 / DSM 8903 / Tp8T 6331) protein is Acetylglutamate kinase.